A 179-amino-acid chain; its full sequence is Large ribosomal subunit protein uL5 (179 aa).

Belongs to the universal ribosomal protein uL5 family. As to quaternary structure, part of the 50S ribosomal subunit; part of the 5S rRNA/L5/L18/L25 subcomplex. Contacts the 5S rRNA and the P site tRNA. Forms a bridge to the 30S subunit in the 70S ribosome.

In terms of biological role, this is one of the proteins that bind and probably mediate the attachment of the 5S RNA into the large ribosomal subunit, where it forms part of the central protuberance. In the 70S ribosome it contacts protein S13 of the 30S subunit (bridge B1b), connecting the 2 subunits; this bridge is implicated in subunit movement. Contacts the P site tRNA; the 5S rRNA and some of its associated proteins might help stabilize positioning of ribosome-bound tRNAs. This chain is Large ribosomal subunit protein uL5, found in Bacillus licheniformis (strain ATCC 14580 / DSM 13 / JCM 2505 / CCUG 7422 / NBRC 12200 / NCIMB 9375 / NCTC 10341 / NRRL NRS-1264 / Gibson 46).